The following is a 959-amino-acid chain: Bifunctional premutilin synthase (959 aa).

The segment at 1–542 (MGLSEDLHAR…ALNVPIPRFD (542 aa)) is class II diterpene cyclase. Residues 309–312 (DADM) carry the DXDD motif motif. The active-site For class II diterpene cyclase activity is Asp311. The interval 543–959 (PASITTLPPI…TANGSNGIHH (417 aa)) is class I diterpene synthase. Asp649 acts as the For class I diterpene synthase activity in catalysis. Residues Asp649, Asp653, and Asn824 each contribute to the Mg(2+) site. A DDXXD motif motif is present at residues 649–653 (DDYLD). Residues 931–959 (KGANGVKKTNGLTTNGTKATANGSNGIHH) form a disordered region. Residues 934-959 (NGVKKTNGLTTNGTKATANGSNGIHH) show a composition bias toward low complexity.

It belongs to the terpene synthase family. Mg(2+) is required as a cofactor.

The protein operates within secondary metabolite biosynthesis; terpenoid biosynthesis. In terms of biological role, bifunctional premutilin synthase; part of the gene cluster that mediates the biosynthesis of pleuromutilin, a tricyclic diterpene showing antibacterial properties. The geranylgeranyl diphosphate (GGPP) synthase ple4 catalyzes the first step in pleuromutilin biosynthesis. GGPP is then substrate of the premutilin synthase (PS) ple3 to yield premutilin. Premutilin synthase is a bifunctional enzyme composed of the fusion of a class II diterpene cyclase (DTC) and a class I diterpene synthase (DTS), with the corresponding domains and active sites containing characteristic aspartate-rich motifs. GGPP is first converted to mutildienyl-diphosphate (MPP) at the class II DTC site. MPP is subsequently further cyclized at the class I DTS site, followed by a 1,5-hydride shift and addition of water prior to terminating deprotonation, to yield premutilin. The cytochrome P450 monooxygenases ple5 and ple6 hydroxylate premutilin at C-11 and C-3, respectively, producing 11-hydroxypremutilin and 3-hydroxypremutilin. The combination of the actions of both ple5 and ple6 leads to the production of 3,11-dihydroxypremutilin. The short chain dehydrogenase ple7 further converts 3,11-dihydroxypremutilin into mutilin. The acetyltransferase ple2 then acetylates mutilin to produce 14-O-acetylmutilin. Finally, the cytochrome P450 monooxygenase ple1 catalyzes hydroxylation on the alpha position of the acetyl side chain of 14-O-acetylmutilin to yield pleuromutilin. This Rhodocybe pseudopiperita (Clitopilus pseudopiperitus) protein is Bifunctional premutilin synthase.